We begin with the raw amino-acid sequence, 153 residues long: UPF0158 protein PA5073 (153 aa).

The protein belongs to the UPF0158 family.

The polypeptide is UPF0158 protein PA5073 (Pseudomonas aeruginosa (strain ATCC 15692 / DSM 22644 / CIP 104116 / JCM 14847 / LMG 12228 / 1C / PRS 101 / PAO1)).